A 289-amino-acid chain; its full sequence is MKVLRAKSAGFCWGVERAIEITRDYAHQGRKPVYTDGPLIHNRQMMEKLSEEGIREVGDYQSRANIAVNPAAPGENPVMVVRAHGISPERRNYLKSLGMDFKDATCPDVGIIAGKIRLHAKKGYATIIFGDKNHPEAIGLLGYTEGRGYCITSKADIDALPALERVCMVSQSTMFMHEFAELSEYARQKFKEVLVFDTICQATKDRQTDVVALARQGAQAIVVIGGHHSANTVKLASLARLQNLPTYHIETAAELSPEEMKKFTVIGVTAGASTPEFLISEVCAKLEAL.

A [4Fe-4S] cluster-binding site is contributed by C12. 2 residues coordinate (2E)-4-hydroxy-3-methylbut-2-enyl diphosphate: H41 and H84. Residues H41 and H84 each coordinate dimethylallyl diphosphate. Residues H41 and H84 each contribute to the isopentenyl diphosphate site. C106 contributes to the [4Fe-4S] cluster binding site. H134 is a binding site for (2E)-4-hydroxy-3-methylbut-2-enyl diphosphate. Position 134 (H134) interacts with dimethylallyl diphosphate. H134 is an isopentenyl diphosphate binding site. E136 (proton donor) is an active-site residue. S172 lines the (2E)-4-hydroxy-3-methylbut-2-enyl diphosphate pocket. Position 200 (C200) interacts with [4Fe-4S] cluster. Positions 229, 231, and 273 each coordinate (2E)-4-hydroxy-3-methylbut-2-enyl diphosphate. Dimethylallyl diphosphate-binding residues include S229, N231, and S273. S229, N231, and S273 together coordinate isopentenyl diphosphate.

It belongs to the IspH family. It depends on [4Fe-4S] cluster as a cofactor.

The enzyme catalyses isopentenyl diphosphate + 2 oxidized [2Fe-2S]-[ferredoxin] + H2O = (2E)-4-hydroxy-3-methylbut-2-enyl diphosphate + 2 reduced [2Fe-2S]-[ferredoxin] + 2 H(+). The catalysed reaction is dimethylallyl diphosphate + 2 oxidized [2Fe-2S]-[ferredoxin] + H2O = (2E)-4-hydroxy-3-methylbut-2-enyl diphosphate + 2 reduced [2Fe-2S]-[ferredoxin] + 2 H(+). It functions in the pathway isoprenoid biosynthesis; dimethylallyl diphosphate biosynthesis; dimethylallyl diphosphate from (2E)-4-hydroxy-3-methylbutenyl diphosphate: step 1/1. The protein operates within isoprenoid biosynthesis; isopentenyl diphosphate biosynthesis via DXP pathway; isopentenyl diphosphate from 1-deoxy-D-xylulose 5-phosphate: step 6/6. Functionally, catalyzes the conversion of 1-hydroxy-2-methyl-2-(E)-butenyl 4-diphosphate (HMBPP) into a mixture of isopentenyl diphosphate (IPP) and dimethylallyl diphosphate (DMAPP). Acts in the terminal step of the DOXP/MEP pathway for isoprenoid precursor biosynthesis. This Opitutus terrae (strain DSM 11246 / JCM 15787 / PB90-1) protein is 4-hydroxy-3-methylbut-2-enyl diphosphate reductase.